A 419-amino-acid chain; its full sequence is Hyaluronidase-3 (419 aa).

An N-terminal signal peptide occupies residues 1–16; it reads MTMQLGLALVLGVAMC. Disulfide bonds link Cys42–Cys331, Cys205–Cys220, Cys356–Cys367, Cys361–Cys395, and Cys397–Cys406. N-linked (GlcNAc...) asparagine glycosylation is present at Asn69. The Proton donor role is filled by Glu129. Asn215 is a glycosylation site (N-linked (GlcNAc...) asparagine). The EGF-like domain maps to 352–407; it reads AAMACSHQRCHGHGRCAWQDPGQLKVFLHLHPGGSPGAWESFSCRCYWGWAGPTCQ.

The protein belongs to the glycosyl hydrolase 56 family. In terms of processing, N-glycosylated. Highly expressed in bladder, spleen and liver. Expressed at low levels in the kidney.

The protein resides in the secreted. It is found in the cell membrane. It localises to the cytoplasmic vesicle. Its subcellular location is the secretory vesicle. The protein localises to the acrosome. The protein resides in the endoplasmic reticulum. It is found in the early endosome. The enzyme catalyses Random hydrolysis of (1-&gt;4)-linkages between N-acetyl-beta-D-glucosamine and D-glucuronate residues in hyaluronate.. Functionally, facilitates sperm penetration into the layer of cumulus cells surrounding the egg by digesting hyaluronic acid. Involved in induction of the acrosome reaction in the sperm. Involved in follicular atresia, the breakdown of immature ovarian follicles that are not selected to ovulate. Induces ovarian granulosa cell apoptosis, possibly via apoptotic signaling pathway involving CASP8 and CASP3 activation, and poly(ADP-ribose) polymerase (PARP) cleavage. Has no hyaluronidase activity in embryonic fibroblasts in vitro. Has no hyaluronidase activity in granulosa cells in vitro. The protein is Hyaluronidase-3 (HYAL3) of Sus scrofa (Pig).